The primary structure comprises 279 residues: MNYNDKSLSALKLGQKTEYKSEYDPTLLQPVPRKLNRDGLGITEQQPFDRGADVWTCYELSWLNENGLPQVAIADVAIDFRSENLIESKSFKLYLNSFNQTKFASLEQVEQTLAKDLSQCASGQVSVKVYKLSAYTQQPIVDFAGECIDEQDIQIDSYEFSNEHLASVAEGEVVEETLVSHLLKSNCLITSQPDWGSVQIHYVGKKLNREKLLRYLVSFREHNEFHEQCVERIFIDLIQFTQPEKLTVYARYTRRGGLDINPFRSNFESVPQNLRMARQ.

86-88 (IES) contacts substrate. 88 to 89 (SK) is a binding site for NADPH. Cys187 (thioimide intermediate) is an active-site residue. Asp194 functions as the Proton donor in the catalytic mechanism. 226–227 (HE) lines the substrate pocket. NADPH is bound at residue 255–256 (RG).

The protein belongs to the GTP cyclohydrolase I family. QueF type 2 subfamily. Homodimer.

Its subcellular location is the cytoplasm. The enzyme catalyses 7-aminomethyl-7-carbaguanine + 2 NADP(+) = 7-cyano-7-deazaguanine + 2 NADPH + 3 H(+). It functions in the pathway tRNA modification; tRNA-queuosine biosynthesis. Functionally, catalyzes the NADPH-dependent reduction of 7-cyano-7-deazaguanine (preQ0) to 7-aminomethyl-7-deazaguanine (preQ1). This Actinobacillus pleuropneumoniae serotype 5b (strain L20) protein is NADPH-dependent 7-cyano-7-deazaguanine reductase.